The following is a 336-amino-acid chain: MIKIAINGYGRIGRNVLRALYESGRDKNIKIVAINELAAPEAMVHLTRFDTSHGRFHHPVQLAGNSMLVGEDLISLFAERDPSRLPWRALGVDVVLDCTGVFGSRADAELHLAAGAGKVLFSHPAEADVDATIVYGVNHQVLTGRERIVSNASCTTNCVVPVIETLHREFEINCGTITTIHSAMHDQQVIDAYHSDLRRTRAASQSIIPVDTKLAKGLERILPHFAGKFEAIAVRVPTINVTAMDLSITVRKKVTVTDVNQALQRASRGTLSGILDYTEEPLVSVDFNHDAHSCIIDGTQTRVSDANLVKMLMWCDNEWGFANRMLDTTRAMMAAG.

Residues 11–12 (RI) and arginine 80 contribute to the NAD(+) site. Substrate contacts are provided by residues 153–155 (SCT), arginine 199, 212–213 (TK), and arginine 235. The Nucleophile role is filled by cysteine 154. Position 317 (asparagine 317) interacts with NAD(+).

It belongs to the glyceraldehyde-3-phosphate dehydrogenase family. Epd subfamily. Homotetramer.

Its subcellular location is the cytoplasm. It catalyses the reaction D-erythrose 4-phosphate + NAD(+) + H2O = 4-phospho-D-erythronate + NADH + 2 H(+). It participates in cofactor biosynthesis; pyridoxine 5'-phosphate biosynthesis; pyridoxine 5'-phosphate from D-erythrose 4-phosphate: step 1/5. Catalyzes the NAD-dependent conversion of D-erythrose 4-phosphate to 4-phosphoerythronate. The protein is D-erythrose-4-phosphate dehydrogenase of Aeromonas hydrophila subsp. hydrophila (strain ATCC 7966 / DSM 30187 / BCRC 13018 / CCUG 14551 / JCM 1027 / KCTC 2358 / NCIMB 9240 / NCTC 8049).